Here is a 196-residue protein sequence, read N- to C-terminus: Rac-like GTP-binding protein RAC9 (196 aa).

A GTP-binding site is contributed by 13 to 20; that stretch reads GDGAVGKT. An Effector region motif is present at residues 35-43; it reads YVPTVFDNF. GTP is bound by residues 60-64 and 118-121; these read DTAGQ and TKLD. The residue at position 193 (C193) is a Cysteine methyl ester. A lipid anchor (S-geranylgeranyl cysteine) is attached at C193. Residues 194–196 constitute a propeptide, removed in mature form; sequence AFL.

Belongs to the small GTPase superfamily. Rho family.

The protein localises to the cytoplasm. It is found in the membrane. Its function is as follows. Inactive GDP-bound Rho GTPases reside in the cytosol, are found in a complex with Rho GDP-dissociation inhibitors (Rho GDIs), and are released from the GDI protein in order to translocate to membranes upon activation. The chain is Rac-like GTP-binding protein RAC9 (RAC9) from Gossypium hirsutum (Upland cotton).